The primary structure comprises 134 residues: DNA-binding protein H-NS, plasmid (134 aa).

Residues 23-67 (LEILEELLEKLSVVVEERRQEESSKEAELKARLEKIESLRQLMLE) adopt a coiled-coil conformation. Positions 77–96 (SSFSAKSGAPKKVREPRPAK) are disordered. The DNA-binding element occupies 112-117 (QGRTPK).

This sequence belongs to the histone-like protein H-NS family. As to quaternary structure, homodimer that oligomerizes on DNA into higher-order complexes that form bridges between disparate regions of DNA compacting it. Interacts with Hha, YdgT and StpA.

Its subcellular location is the cytoplasm. The protein resides in the nucleoid. Functionally, a DNA-binding protein implicated in transcriptional repression and chromosome organization and compaction. Binds DNA, modifying gene expression, especially non-core genes. Does not regulate the same set of genes as its chromosomal counterpart (tested in S.typhimurium strain SL1344 / SV5015, chromosomal H-NS protein is AC A0A0H3NBY9). Thus it has a not-completely overlapping set of gene targets compared to its chromosomal homolog; many of these target genes are either plasmid-encoded or acquired by horizontally transferred genes (HTG). This protein can function in the absence of H-NS-modulating protein Hha (either chromosomal or plasmid-encoded), although many HTG genes are regulated by an H-NS/Hha complex. Binds nucleation sites in AT-rich DNA and bridges them, forming higher-order nucleoprotein complexes and condensing the chromosome. A subset of genes are repressed by H-NS in association with Hha and/or Cnu (ydgT). The protein is DNA-binding protein H-NS, plasmid (hns) of Salmonella typhi.